Reading from the N-terminus, the 147-residue chain is uncharacterized protein (147 aa).

A disordered region spans residues 23 to 48 (EEVSQPEPNTANDSSTEYKGKSKDDF). Residues 28-37 (PEPNTANDSS) are compositionally biased toward polar residues. Residues 38–48 (TEYKGKSKDDF) are compositionally biased toward basic and acidic residues. The helical transmembrane segment at 85 to 105 (LMFCIIACSFICAIQFLFFII) threads the bilayer.

It localises to the membrane. This is an uncharacterized protein from Saccharomyces cerevisiae (strain ATCC 204508 / S288c) (Baker's yeast).